A 518-amino-acid chain; its full sequence is Chromosomal replication initiator protein DnaA (518 aa).

Residues 1-72 (MNEFWQHCSA…DLARDFWHSP (72 aa)) are domain I, interacts with DnaA modulators. The tract at residues 72 to 181 (PVDVQFVLDP…GESDSTYERS (110 aa)) is domain II. The disordered stretch occupies residues 155 to 178 (AAARRTWRPGAAAQAAGGESDSTY). Positions 182–398 (KLNPVLTFDN…GALRKILAYS (217 aa)) are domain III, AAA+ region. ATP contacts are provided by Gly226, Gly228, Lys229, and Thr230. The segment at 399-518 (KFHGREITIE…LHVLEQTLKG (120 aa)) is domain IV, binds dsDNA.

This sequence belongs to the DnaA family. As to quaternary structure, oligomerizes as a right-handed, spiral filament on DNA at oriC.

The protein resides in the cytoplasm. Functionally, plays an essential role in the initiation and regulation of chromosomal replication. ATP-DnaA binds to the origin of replication (oriC) to initiate formation of the DNA replication initiation complex once per cell cycle. Binds the DnaA box (a 9 base pair repeat at the origin) and separates the double-stranded (ds)DNA. Forms a right-handed helical filament on oriC DNA; dsDNA binds to the exterior of the filament while single-stranded (ss)DNA is stabiized in the filament's interior. The ATP-DnaA-oriC complex binds and stabilizes one strand of the AT-rich DNA unwinding element (DUE), permitting loading of DNA polymerase. After initiation quickly degrades to an ADP-DnaA complex that is not apt for DNA replication. Binds acidic phospholipids. In Paraburkholderia phymatum (strain DSM 17167 / CIP 108236 / LMG 21445 / STM815) (Burkholderia phymatum), this protein is Chromosomal replication initiator protein DnaA.